The sequence spans 736 residues: MSENGKCPVTGKTSKPVAGGGTSNQDWWPNQLNLNILHQQSSKSNPMGGDFNYAEEFKKLDLKAVKEDLYTLMTDSQEWWPADYGHYGPLFIRMAWHSAGTYRMGDGRGGAGSGSQRLAPLNSWPDNVNLDKARRLLWPIKQKYGKRISWADLMVLAGNCAIESMGLPTFGFAGGREDVWEPEQDVYWGSEEEWLATSDKPKSRYSGERDLENPLAAVQMGLIYVNPEGPDGNPDPIASGKDVRETFARMAMNDEETVALVAGGHTFGKCHGAGDAALVGPEPEAAPLEEMGLGWKSSHGRGKGGDTISSGIEGAWKPRPTTWDMGYLKVLFKYDWELVKSPAGANQWLAKDVDDEDMVVDAHDPDKKHRPMMTTADLSLKFDPIYEPIARRYLENPEEFADAFARAWFKLTHRDMGPRARYLGPEVPEEDLIWQDPIPAVDHELIDDKDIADLKAKILASGLSVSQLVTTAWASASTFRGSDNRGGANGARIRFAPQKDWAVNQPAELQKVLQALEGIQKDFNAGQSGGKKVSLADLIVLGGCAGVEKAAQNAGADAAVPFAPGRMDALEEQTDGDSFSVLEPKADGFRNFQKAKFAVKAEELLVDRAQLLTLTAPEMTVLVGGLRMLGANYGNSKHGVFTDKSETLTNDFFVNLLDMGTVWKPSANDEDVFEGSDRKTGALKWTGTRVDLVFGSNSQLRAIAEVYGCEDGQEKFVQDFVAAWDKVMSLDRFDLA.

The segment at 1–25 is disordered; that stretch reads MSENGKCPVTGKTSKPVAGGGTSNQ. A cross-link (tryptophyl-tyrosyl-methioninium (Trp-Tyr) (with M-250)) is located at residues 96–224; it reads WHSAGTYRMG…LAAVQMGLIY (129 aa). The active-site Proton acceptor is the His-97. The segment at residues 224–250 is a cross-link (tryptophyl-tyrosyl-methioninium (Tyr-Met) (with W-96)); sequence YVNPEGPDGNPDPIASGKDVRETFARM. His-265 lines the heme b pocket. Residues 294-313 form a disordered region; the sequence is GWKSSHGRGKGGDTISSGIE.

Belongs to the peroxidase family. Peroxidase/catalase subfamily. In terms of assembly, homodimer or homotetramer. The cofactor is heme b. Formation of the three residue Trp-Tyr-Met cross-link is important for the catalase, but not the peroxidase activity of the enzyme.

It carries out the reaction H2O2 + AH2 = A + 2 H2O. The enzyme catalyses 2 H2O2 = O2 + 2 H2O. Its function is as follows. Bifunctional enzyme with both catalase and broad-spectrum peroxidase activity. The sequence is that of Catalase-peroxidase from Desulfatibacillum aliphaticivorans.